Here is a 201-residue protein sequence, read N- to C-terminus: MSRYRGPRFKKIRRLGALPGLTNKKPRTGSDLRNQSRSGKKSQYRIRLEEKQKLRFHYGLTERQLLKYVRIARKAKGSTGQVLLQLLEMRLDNILFRLGMASTIPAARQLVNHRHILVNGHIVDIPSYRCKPRDIITAKDEQKSRALIQISLDSSPHEELPNHLTLQPFQYKGLVNQIIDSKWVGLKINELLVVEYYSRQT.

The tract at residues 17 to 44 (ALPGLTNKKPRTGSDLRNQSRSGKKSQY) is disordered. In terms of domain architecture, S4 RNA-binding spans 89-149 (MRLDNILFRL…DEQKSRALIQ (61 aa)).

Belongs to the universal ribosomal protein uS4 family. As to quaternary structure, part of the 30S ribosomal subunit. Contacts protein S5. The interaction surface between S4 and S5 is involved in control of translational fidelity.

The protein localises to the plastid. It is found in the chloroplast. In terms of biological role, one of the primary rRNA binding proteins, it binds directly to 16S rRNA where it nucleates assembly of the body of the 30S subunit. With S5 and S12 plays an important role in translational accuracy. The polypeptide is Small ribosomal subunit protein uS4c (rps4) (Solanum bulbocastanum (Wild potato)).